A 238-amino-acid polypeptide reads, in one-letter code: Ribonuclease PH (238 aa).

Residues Arg-86 and 124 to 126 contribute to the phosphate site; that span reads GTR.

This sequence belongs to the RNase PH family. In terms of assembly, homohexameric ring arranged as a trimer of dimers.

It carries out the reaction tRNA(n+1) + phosphate = tRNA(n) + a ribonucleoside 5'-diphosphate. Functionally, phosphorolytic 3'-5' exoribonuclease that plays an important role in tRNA 3'-end maturation. Removes nucleotide residues following the 3'-CCA terminus of tRNAs; can also add nucleotides to the ends of RNA molecules by using nucleoside diphosphates as substrates, but this may not be physiologically important. Probably plays a role in initiation of 16S rRNA degradation (leading to ribosome degradation) during starvation. The protein is Ribonuclease PH of Serratia proteamaculans (strain 568).